The primary structure comprises 129 residues: Cytochrome c oxidase subunit 13, mitochondrial (129 aa).

The N-terminal 9 residues, 1 to 9 (MFRQCAKRY), are a transit peptide targeting the mitochondrion. Residues 10–43 (ASSLPPNALKPAFGPPDKVAAQKFKESLMATEKH) are Mitochondrial matrix-facing. The helical transmembrane segment at 44–71 (AKDTSNMWVKISVWVALPAIALTAVNTY) threads the bilayer. The Mitochondrial intermembrane segment spans residues 72–129 (FVEKEHAEHREHLKHVPDSEWPRDYEFMNIRSKPFFWGDGDKTLFWNPVVNRHIEHDD).

This sequence belongs to the cytochrome c oxidase subunit 6A family. Component of the cytochrome c oxidase (complex IV, CIV), a multisubunit enzyme composed of 12 subunits. The complex is composed of a catalytic core of 3 subunits COX1, COX2 and COX3, encoded in the mitochondrial DNA, and 9 supernumerary subunits COX4, COX5A (or COX5B), COX6, COX7, COX8, COX9, COX12, COX13 and COX26, which are encoded in the nuclear genome. The complex exists as a monomer or a dimer and forms supercomplexes (SCs) in the inner mitochondrial membrane with a dimer of ubiquinol-cytochrome c oxidoreductase (cytochrome b-c1 complex, complex III, CIII), resulting in 2 different assemblies (supercomplexes III(2)IV and III(2)IV(2)). COX13 interacts with COX1 and COX3 on the intermembrane space (IMS) and COX4 on the matrix side.

Its subcellular location is the mitochondrion inner membrane. The protein operates within energy metabolism; oxidative phosphorylation. Functionally, component of the cytochrome c oxidase, the last enzyme in the mitochondrial electron transport chain which drives oxidative phosphorylation. The respiratory chain contains 3 multisubunit complexes succinate dehydrogenase (complex II, CII), ubiquinol-cytochrome c oxidoreductase (cytochrome b-c1 complex, complex III, CIII) and cytochrome c oxidase (complex IV, CIV), that cooperate to transfer electrons derived from NADH and succinate to molecular oxygen, creating an electrochemical gradient over the inner membrane that drives transmembrane transport and the ATP synthase. Cytochrome c oxidase is the component of the respiratory chain that catalyzes the reduction of oxygen to water. Electrons originating from reduced cytochrome c in the intermembrane space (IMS) are transferred via the dinuclear copper A center (CU(A)) of COX2 and heme A of COX1 to the active site in COX1, a binuclear center (BNC) formed by heme A3 and copper B (CU(B)). The BNC reduces molecular oxygen to 2 water molecules using 4 electrons from cytochrome c in the IMS and 4 protons from the mitochondrial matrix. The protein is Cytochrome c oxidase subunit 13, mitochondrial (COX13) of Saccharomyces cerevisiae (strain ATCC 204508 / S288c) (Baker's yeast).